A 487-amino-acid polypeptide reads, in one-letter code: Protein nucleotidyltransferase YdiU (487 aa).

ATP is bound by residues glycine 90, glycine 92, arginine 93, lysine 113, aspartate 125, glycine 126, arginine 176, and arginine 183. Aspartate 252 functions as the Proton acceptor in the catalytic mechanism. The Mg(2+) site is built by asparagine 253 and aspartate 262. Residue aspartate 262 coordinates ATP.

Belongs to the SELO family. It depends on Mg(2+) as a cofactor. Requires Mn(2+) as cofactor.

It carries out the reaction L-seryl-[protein] + ATP = 3-O-(5'-adenylyl)-L-seryl-[protein] + diphosphate. It catalyses the reaction L-threonyl-[protein] + ATP = 3-O-(5'-adenylyl)-L-threonyl-[protein] + diphosphate. The enzyme catalyses L-tyrosyl-[protein] + ATP = O-(5'-adenylyl)-L-tyrosyl-[protein] + diphosphate. The catalysed reaction is L-histidyl-[protein] + UTP = N(tele)-(5'-uridylyl)-L-histidyl-[protein] + diphosphate. It carries out the reaction L-seryl-[protein] + UTP = O-(5'-uridylyl)-L-seryl-[protein] + diphosphate. It catalyses the reaction L-tyrosyl-[protein] + UTP = O-(5'-uridylyl)-L-tyrosyl-[protein] + diphosphate. Functionally, nucleotidyltransferase involved in the post-translational modification of proteins. It can catalyze the addition of adenosine monophosphate (AMP) or uridine monophosphate (UMP) to a protein, resulting in modifications known as AMPylation and UMPylation. This chain is Protein nucleotidyltransferase YdiU, found in Pseudomonas syringae pv. tomato (strain ATCC BAA-871 / DC3000).